We begin with the raw amino-acid sequence, 303 residues long: Nucleotide-binding protein SAR0820 (303 aa).

Position 18–25 (18–25) interacts with ATP; the sequence is GLSGAGKS. A GTP-binding site is contributed by 69–72; that stretch reads DLRG.

This sequence belongs to the RapZ-like family.

In terms of biological role, displays ATPase and GTPase activities. This is Nucleotide-binding protein SAR0820 from Staphylococcus aureus (strain MRSA252).